The chain runs to 297 residues: 5'-3' exonuclease (297 aa).

One can recognise a 5'-3' exonuclease domain in the interval 171-262 (EPDQIVDFKA…MKLEKELFAI (92 aa)).

Its function is as follows. 5'-3' exonuclease acting preferentially on double-stranded DNA. This Mycoplasmopsis pulmonis (strain UAB CTIP) (Mycoplasma pulmonis) protein is 5'-3' exonuclease (polA).